The following is a 363-amino-acid chain: Pyrimidine monooxygenase RutA (363 aa).

Residues 49-50 (IK), Asn-115, Glu-124, 140-141 (RY), and Ser-190 each bind FMN.

It belongs to the NtaA/SnaA/DszA monooxygenase family. RutA subfamily.

The catalysed reaction is uracil + FMNH2 + NADH + O2 = (Z)-3-ureidoacrylate + FMN + NAD(+) + H2O + H(+). The enzyme catalyses thymine + FMNH2 + NADH + O2 = (Z)-2-methylureidoacrylate + FMN + NAD(+) + H2O + H(+). Functionally, catalyzes the pyrimidine ring opening between N-3 and C-4 by an unusual flavin hydroperoxide-catalyzed mechanism, adding oxygen atoms in the process to yield ureidoacrylate peracid, that immediately reacts with FMN forming ureidoacrylate and FMN-N(5)-oxide. The FMN-N(5)-oxide reacts spontaneously with NADH to produce FMN. Requires the flavin reductase RutF to regenerate FMN in vivo. The chain is Pyrimidine monooxygenase RutA from Rhizobium rhizogenes (strain K84 / ATCC BAA-868) (Agrobacterium radiobacter).